We begin with the raw amino-acid sequence, 297 residues long: Acetylglutamate kinase (297 aa).

Substrate contacts are provided by residues 68 to 69, arginine 90, and asparagine 189; that span reads GG.

The protein belongs to the acetylglutamate kinase family. ArgB subfamily.

The protein localises to the cytoplasm. The catalysed reaction is N-acetyl-L-glutamate + ATP = N-acetyl-L-glutamyl 5-phosphate + ADP. It participates in amino-acid biosynthesis; L-arginine biosynthesis; N(2)-acetyl-L-ornithine from L-glutamate: step 2/4. Its function is as follows. Catalyzes the ATP-dependent phosphorylation of N-acetyl-L-glutamate. The protein is Acetylglutamate kinase of Akkermansia muciniphila (strain ATCC BAA-835 / DSM 22959 / JCM 33894 / BCRC 81048 / CCUG 64013 / CIP 107961 / Muc).